Reading from the N-terminus, the 238-residue chain is MAWIRPDGRRPDQLRAIAFQRRFTQFPAGSVLAQFGQTQVLCTVTIQAGVPRWLTGQGQGWLTAEYRMLPGATPDRQSREWLKLSGRTQEIQRLIGRSLRAAIDLKKLGERTLLIDADVLQADAGTRTTAINGSWVALQDAIAQLIAQGELTESPIQRSIAAVSVALIGGEAFLDPDYPEDVQADVDCNVVMGDRGELIEIQGTAEANPFSRTQLNHILDLAEQGIAQIQAAQLEALR.

Residues Arg-87 and 125–127 contribute to the phosphate site; that span reads GTR.

This sequence belongs to the RNase PH family. As to quaternary structure, homohexameric ring arranged as a trimer of dimers.

The catalysed reaction is tRNA(n+1) + phosphate = tRNA(n) + a ribonucleoside 5'-diphosphate. Phosphorolytic 3'-5' exoribonuclease that plays an important role in tRNA 3'-end maturation. Removes nucleotide residues following the 3'-CCA terminus of tRNAs; can also add nucleotides to the ends of RNA molecules by using nucleoside diphosphates as substrates, but this may not be physiologically important. Probably plays a role in initiation of 16S rRNA degradation (leading to ribosome degradation) during starvation. The chain is Ribonuclease PH from Synechococcus elongatus (strain ATCC 33912 / PCC 7942 / FACHB-805) (Anacystis nidulans R2).